We begin with the raw amino-acid sequence, 189 residues long: Cell division protein SepF (189 aa).

Disordered stretches follow at residues 1 to 75 (MEGQ…GLPG) and 155 to 174 (STPS…SPTP).

The protein belongs to the SepF family. In terms of assembly, homodimer. Interacts with FtsZ.

It is found in the cytoplasm. Its function is as follows. Cell division protein that is part of the divisome complex and is recruited early to the Z-ring. Probably stimulates Z-ring formation, perhaps through the cross-linking of FtsZ protofilaments. Its function overlaps with FtsA. In Synechococcus sp. (strain JA-3-3Ab) (Cyanobacteria bacterium Yellowstone A-Prime), this protein is Cell division protein SepF.